A 395-amino-acid polypeptide reads, in one-letter code: Acetate kinase (395 aa).

Residue Asn-8 participates in Mg(2+) binding. Lys-15 provides a ligand contact to ATP. Arg-89 serves as a coordination point for substrate. Asp-146 serves as the catalytic Proton donor/acceptor. ATP is bound by residues 206-210 (HLGNG), 281-283 (DLR), and 329-333 (GIGEN). Position 382 (Glu-382) interacts with Mg(2+).

This sequence belongs to the acetokinase family. In terms of assembly, homodimer. The cofactor is Mg(2+). Requires Mn(2+) as cofactor.

It is found in the cytoplasm. The catalysed reaction is acetate + ATP = acetyl phosphate + ADP. It participates in metabolic intermediate biosynthesis; acetyl-CoA biosynthesis; acetyl-CoA from acetate: step 1/2. Functionally, catalyzes the formation of acetyl phosphate from acetate and ATP. Can also catalyze the reverse reaction. This Shouchella clausii (strain KSM-K16) (Alkalihalobacillus clausii) protein is Acetate kinase.